We begin with the raw amino-acid sequence, 298 residues long: 4-hydroxy-tetrahydrodipicolinate synthase (298 aa).

A pyruvate-binding site is contributed by T51. Y139 acts as the Proton donor/acceptor in catalysis. The Schiff-base intermediate with substrate role is filled by K167. Residue I209 participates in pyruvate binding.

This sequence belongs to the DapA family. In terms of assembly, homotetramer; dimer of dimers.

Its subcellular location is the cytoplasm. The enzyme catalyses L-aspartate 4-semialdehyde + pyruvate = (2S,4S)-4-hydroxy-2,3,4,5-tetrahydrodipicolinate + H2O + H(+). Its pathway is amino-acid biosynthesis; L-lysine biosynthesis via DAP pathway; (S)-tetrahydrodipicolinate from L-aspartate: step 3/4. Functionally, catalyzes the condensation of (S)-aspartate-beta-semialdehyde [(S)-ASA] and pyruvate to 4-hydroxy-tetrahydrodipicolinate (HTPA). The sequence is that of 4-hydroxy-tetrahydrodipicolinate synthase from Haemophilus influenzae (strain ATCC 51907 / DSM 11121 / KW20 / Rd).